A 126-amino-acid chain; its full sequence is Aspartate 1-decarboxylase (126 aa).

The active-site Schiff-base intermediate with substrate; via pyruvic acid is serine 25. Serine 25 carries the pyruvic acid (Ser) modification. Residue threonine 57 participates in substrate binding. The active-site Proton donor is the tyrosine 58. 73–75 contributes to the substrate binding site; the sequence is GGA.

This sequence belongs to the PanD family. Heterooctamer of four alpha and four beta subunits. The cofactor is pyruvate. Post-translationally, is synthesized initially as an inactive proenzyme, which is activated by self-cleavage at a specific serine bond to produce a beta-subunit with a hydroxyl group at its C-terminus and an alpha-subunit with a pyruvoyl group at its N-terminus.

Its subcellular location is the cytoplasm. It carries out the reaction L-aspartate + H(+) = beta-alanine + CO2. It participates in cofactor biosynthesis; (R)-pantothenate biosynthesis; beta-alanine from L-aspartate: step 1/1. Functionally, catalyzes the pyruvoyl-dependent decarboxylation of aspartate to produce beta-alanine. The protein is Aspartate 1-decarboxylase of Xanthomonas axonopodis pv. citri (strain 306).